The following is a 330-amino-acid chain: Phosphate acyltransferase (330 aa).

Belongs to the PlsX family. Homodimer. Probably interacts with PlsY.

The protein localises to the cytoplasm. It carries out the reaction a fatty acyl-[ACP] + phosphate = an acyl phosphate + holo-[ACP]. The protein operates within lipid metabolism; phospholipid metabolism. Its function is as follows. Catalyzes the reversible formation of acyl-phosphate (acyl-PO(4)) from acyl-[acyl-carrier-protein] (acyl-ACP). This enzyme utilizes acyl-ACP as fatty acyl donor, but not acyl-CoA. The sequence is that of Phosphate acyltransferase from Lactobacillus delbrueckii subsp. bulgaricus (strain ATCC BAA-365 / Lb-18).